The following is a 733-amino-acid chain: Methionine--tRNA ligase (733 aa).

Positions 11–21 match the 'HIGH' region motif; the sequence is PYANGPIHAGH. Zn(2+) is bound by residues C143, C146, C156, and C159. The 'KMSKS' region motif lies at 345–349; the sequence is KFSTS. Residue T348 participates in ATP binding. Positions 633–733 constitute a tRNA-binding domain; sequence DFMKLDLRVG…KEVKLGARIR (101 aa).

Belongs to the class-I aminoacyl-tRNA synthetase family. MetG type 1 subfamily. In terms of assembly, homodimer. Zn(2+) is required as a cofactor.

It localises to the cytoplasm. It catalyses the reaction tRNA(Met) + L-methionine + ATP = L-methionyl-tRNA(Met) + AMP + diphosphate. In terms of biological role, is required not only for elongation of protein synthesis but also for the initiation of all mRNA translation through initiator tRNA(fMet) aminoacylation. This chain is Methionine--tRNA ligase, found in Thermococcus onnurineus (strain NA1).